The following is a 1161-amino-acid chain: Nardilysin (1161 aa).

The first 18 residues, 1–18 (MLRRVAVAAVCVTGRKLR), serve as a signal peptide directing secretion. Disordered regions lie at residues 49-103 (MPGR…IIKS) and 130-218 (VEGK…KKTT). 3 positions are modified to phosphoserine: serine 85, serine 91, and serine 93. Positions 138–209 (TDEEEEEEEE…EENELEELEE (72 aa)) are enriched in acidic residues. Histidine 244 is a Zn(2+) binding site. Glutamate 247 acts as the Proton acceptor in catalysis. Zn(2+) contacts are provided by histidine 248 and glutamate 325.

The protein belongs to the peptidase M16 family. Interacts with BACE1 and NRG1. It depends on Zn(2+) as a cofactor. In terms of tissue distribution, highly expressed in brain of early postnatal mice but expressed at a lower level in the brains of adult mice. Expression is high in cortical neurons, and lower in neurons in the striatum. Very low expression detected in the corpus callosum. Also expressed in the gray matter in spinal cord and dorsal root ganglia.

It is found in the mitochondrion. It localises to the cell projection. Its subcellular location is the dendrite. The catalysed reaction is Hydrolysis of polypeptides, preferably at -Xaa-|-Arg-Lys-, and less commonly at -Arg-|-Arg-Xaa-, in which Xaa is not Arg or Lys.. Cleaves peptide substrates on the N-terminus of arginine residues in dibasic pairs. Is a critical activator of BACE1- and ADAM17-mediated pro-neuregulin ectodomain shedding, involved in the positive regulation of axonal maturation and myelination. Required for proper functioning of 2-oxoglutarate dehydrogenase (OGDH). The polypeptide is Nardilysin (Mus musculus (Mouse)).